Reading from the N-terminus, the 176-residue chain is Inorganic pyrophosphatase (176 aa).

The substrate site is built by Lys-30, Arg-44, and Tyr-56. Mg(2+) contacts are provided by Asp-66, Asp-71, and Asp-103. Tyr-142 contributes to the substrate binding site.

This sequence belongs to the PPase family. As to quaternary structure, homohexamer. Mg(2+) serves as cofactor.

It localises to the cytoplasm. The enzyme catalyses diphosphate + H2O = 2 phosphate + H(+). Functionally, catalyzes the hydrolysis of inorganic pyrophosphate (PPi) forming two phosphate ions. The sequence is that of Inorganic pyrophosphatase from Vibrio vulnificus (strain CMCP6).